The sequence spans 299 residues: MPT51/MPB51 antigen (299 aa).

A signal peptide spans 1 to 26 (MKGRSALLRALWIAALSFGLGGVAVA).

It belongs to the mycobacterial A85 antigen family. Homodimer.

The protein resides in the secreted. Its function is as follows. May have a role in host tissue attachment, whereby ligands may include the serum protein fibronectin and small sugars. In Mycobacterium bovis (strain ATCC BAA-935 / AF2122/97), this protein is MPT51/MPB51 antigen (mpt51).